We begin with the raw amino-acid sequence, 228 residues long: Ribosomal RNA small subunit methyltransferase G (228 aa).

S-adenosyl-L-methionine-binding positions include glycine 70, 121–122 (AE), and arginine 138.

It belongs to the methyltransferase superfamily. RNA methyltransferase RsmG family.

It is found in the cytoplasm. Specifically methylates the N7 position of a guanine in 16S rRNA. The polypeptide is Ribosomal RNA small subunit methyltransferase G (Thermotoga sp. (strain RQ2)).